Reading from the N-terminus, the 101-residue chain is Small ribosomal subunit protein uS14 (101 aa).

Belongs to the universal ribosomal protein uS14 family. In terms of assembly, part of the 30S ribosomal subunit. Contacts proteins S3 and S10.

Its function is as follows. Binds 16S rRNA, required for the assembly of 30S particles and may also be responsible for determining the conformation of the 16S rRNA at the A site. The chain is Small ribosomal subunit protein uS14 from Shewanella oneidensis (strain ATCC 700550 / JCM 31522 / CIP 106686 / LMG 19005 / NCIMB 14063 / MR-1).